The primary structure comprises 1043 residues: F-box DNA helicase 1 (1043 aa).

Positions Gln30 to Ser56 are disordered. A PIP-box motif is present at residues Gln57–Phe64. Residues Cys101–Pro191 form a disordered region. Ser124 is modified (phosphoserine). The F-box domain maps to Ser138–Ala184. Residues Arg158–Thr170 show a composition bias toward basic and acidic residues. A UvrD-like helicase ATP-binding domain is found at Thr442–Gly705. Ala463 to Thr470 is an ATP binding site. The APIM motif signature appears at Lys807 to Arg811.

The protein belongs to the helicase family. UvrD subfamily. In terms of assembly, part of the SCF (SKP1-CUL1-F-box) E3 ubiquitin-protein ligase complex SCF(FBH1) composed of CUL1, SKP1, RBX1 and FBH1. Interacts with RAD51. Interacts with RPA2. Interacts (via PIP-box and RanBP2-type zinc finger) with PCNA. Ubiquitinated. Ubiquitination by the DCX(DTL) complex, also named CRL4(CDT2), leading to its degradation: ubiquitination takes place after its localization to DNA damage sites, possibly to facilitate the translesion synthesis (TLS) pathway.

The protein localises to the nucleus. It is found in the chromosome. It carries out the reaction Couples ATP hydrolysis with the unwinding of duplex DNA by translocating in the 3'-5' direction.. The enzyme catalyses ATP + H2O = ADP + phosphate + H(+). The protein operates within protein modification; protein ubiquitination. Its function is as follows. 3'-5' DNA helicase and substrate-recognition component of the SCF(FBH1) E3 ubiquitin ligase complex that plays a key role in response to stalled/damaged replication forks. Involved in genome maintenance by acting as an anti-recombinogenic helicase and preventing extensive strand exchange during homologous recombination: promotes RAD51 filament dissolution from stalled forks, thereby inhibiting homologous recombination and preventing excessive recombination. Also promotes cell death and DNA double-strand breakage in response to replication stress: together with MUS81, promotes the endonucleolytic DNA cleavage following prolonged replication stress via its helicase activity, possibly to eliminate cells with excessive replication stress. Plays a major role in remodeling of stalled DNA forks by catalyzing fork regression, in which the fork reverses and the two nascent DNA strands anneal. In addition to the helicase activity, also acts as the substrate-recognition component of the SCF(FBH1) E3 ubiquitin ligase complex, a complex that mediates ubiquitination of RAD51, leading to regulate RAD51 subcellular location. This is F-box DNA helicase 1 from Homo sapiens (Human).